A 369-amino-acid chain; its full sequence is LIM homeobox transcription factor 1-beta (369 aa).

LIM zinc-binding domains follow at residues 23-73 (CEGC…CKQD) and 82-135 (CSGC…CKGD). A disordered region spans residues 143 to 196 (LSSVSPDESDSVKSEDEDGDMKPAKGQGSQSKGGGDDGKDPRRPKRPRTILTTQ). Residues 186 to 245 (PKRPRTILTTQQRRAFKASFEVSSKPCRKVRETLAAETGLSVRVVQVWFQNQRAKMKKLA) constitute a DNA-binding region (homeobox).

Interacts with DHX9.

It localises to the nucleus. Functionally, transcription factor involved in the regulation of podocyte-expressed genes. Essential for the specification of dorsal limb fate at both the zeugopodal and autopodal levels. The polypeptide is LIM homeobox transcription factor 1-beta (LMX1B) (Mesocricetus auratus (Golden hamster)).